Consider the following 502-residue polypeptide: ATP synthase subunit alpha (502 aa).

The interval V115–M137 is disordered. G169 to T176 serves as a coordination point for ATP.

Belongs to the ATPase alpha/beta chains family. As to quaternary structure, F-type ATPases have 2 components, CF(1) - the catalytic core - and CF(0) - the membrane proton channel. CF(1) has five subunits: alpha(3), beta(3), gamma(1), delta(1), epsilon(1). CF(0) has three main subunits: a(1), b(2) and c(9-12). The alpha and beta chains form an alternating ring which encloses part of the gamma chain. CF(1) is attached to CF(0) by a central stalk formed by the gamma and epsilon chains, while a peripheral stalk is formed by the delta and b chains.

Its subcellular location is the cell membrane. It catalyses the reaction ATP + H2O + 4 H(+)(in) = ADP + phosphate + 5 H(+)(out). Produces ATP from ADP in the presence of a proton gradient across the membrane. The alpha chain is a regulatory subunit. In Geobacillus kaustophilus (strain HTA426), this protein is ATP synthase subunit alpha.